A 316-amino-acid chain; its full sequence is 4-hydroxy-3-methylbut-2-enyl diphosphate reductase (316 aa).

Cys12 lines the [4Fe-4S] cluster pocket. 2 residues coordinate (2E)-4-hydroxy-3-methylbut-2-enyl diphosphate: His41 and His74. Dimethylallyl diphosphate contacts are provided by His41 and His74. Isopentenyl diphosphate-binding residues include His41 and His74. Position 96 (Cys96) interacts with [4Fe-4S] cluster. His124 lines the (2E)-4-hydroxy-3-methylbut-2-enyl diphosphate pocket. Position 124 (His124) interacts with dimethylallyl diphosphate. His124 serves as a coordination point for isopentenyl diphosphate. Glu126 acts as the Proton donor in catalysis. Residue Thr167 participates in (2E)-4-hydroxy-3-methylbut-2-enyl diphosphate binding. Residue Cys197 coordinates [4Fe-4S] cluster. (2E)-4-hydroxy-3-methylbut-2-enyl diphosphate contacts are provided by Ser225, Ser226, Asn227, and Ser269. Ser225, Ser226, Asn227, and Ser269 together coordinate dimethylallyl diphosphate. Positions 225, 226, 227, and 269 each coordinate isopentenyl diphosphate.

Belongs to the IspH family. As to quaternary structure, homodimer. Requires [4Fe-4S] cluster as cofactor.

It catalyses the reaction isopentenyl diphosphate + 2 oxidized [2Fe-2S]-[ferredoxin] + H2O = (2E)-4-hydroxy-3-methylbut-2-enyl diphosphate + 2 reduced [2Fe-2S]-[ferredoxin] + 2 H(+). The enzyme catalyses dimethylallyl diphosphate + 2 oxidized [2Fe-2S]-[ferredoxin] + H2O = (2E)-4-hydroxy-3-methylbut-2-enyl diphosphate + 2 reduced [2Fe-2S]-[ferredoxin] + 2 H(+). It functions in the pathway isoprenoid biosynthesis; dimethylallyl diphosphate biosynthesis; dimethylallyl diphosphate from (2E)-4-hydroxy-3-methylbutenyl diphosphate: step 1/1. Its pathway is isoprenoid biosynthesis; isopentenyl diphosphate biosynthesis via DXP pathway; isopentenyl diphosphate from 1-deoxy-D-xylulose 5-phosphate: step 6/6. In terms of biological role, catalyzes the conversion of 1-hydroxy-2-methyl-2-(E)-butenyl 4-diphosphate (HMBPP) into a mixture of isopentenyl diphosphate (IPP) and dimethylallyl diphosphate (DMAPP). Acts in the terminal step of the DOXP/MEP pathway for isoprenoid precursor biosynthesis. This is 4-hydroxy-3-methylbut-2-enyl diphosphate reductase from Salmonella schwarzengrund (strain CVM19633).